A 328-amino-acid chain; its full sequence is Alpha-tubulin N-acetyltransferase 2 (328 aa).

The N-acetyltransferase domain occupies 5-185; the sequence is SQVALLPKLS…NNFVVFHRYF (181 aa). Acetyl-CoA is bound by residues 119–132 and 155–164; these read FFVD…GFGK and SVKFLAFLRK. Disordered regions lie at residues 219–261 and 282–328; these read EYQS…PGKK and GGDP…TPEH. Residues 238–248 show a composition bias toward pro residues; it reads TPPPPLPPPLV. Over residues 312–328 the composition is skewed to polar residues; the sequence is PTRSGVQYNIISGTPEH.

This sequence belongs to the acetyltransferase ATAT1 family.

The enzyme catalyses L-lysyl-[alpha-tubulin] + acetyl-CoA = N(6)-acetyl-L-lysyl-[alpha-tubulin] + CoA + H(+). Functionally, specifically acetylates 'Lys-40' in alpha-tubulin on the lumenal side of microtubules. Promotes microtubule destabilization and accelerates microtubule dynamics; this activity may be independent of acetylation activity. Acetylates alpha-tubulin with a slow enzymatic rate, due to a catalytic site that is not optimized for acetyl transfer. Enters the microtubule through each end and diffuses quickly throughout the lumen of microtubules. Acetylates only long/old microtubules because of its slow acetylation rate since it does not have time to act on dynamically unstable microtubules before the enzyme is released. The protein is Alpha-tubulin N-acetyltransferase 2 of Trypanosoma cruzi (strain CL Brener).